The chain runs to 462 residues: Argininosuccinate lyase (462 aa).

The protein belongs to the lyase 1 family. Argininosuccinate lyase subfamily.

Its subcellular location is the cytoplasm. It carries out the reaction 2-(N(omega)-L-arginino)succinate = fumarate + L-arginine. It participates in amino-acid biosynthesis; L-arginine biosynthesis; L-arginine from L-ornithine and carbamoyl phosphate: step 3/3. This is Argininosuccinate lyase from Hydrogenovibrio crunogenus (strain DSM 25203 / XCL-2) (Thiomicrospira crunogena).